Consider the following 193-residue polypeptide: Ion-translocating oxidoreductase complex subunit B (193 aa).

The segment at 1 to 26 (MSTMLIAVILLTLLALFFGVLLGFAA) is hydrophobic. The 4Fe-4S domain maps to 32 to 90 (EGNPIVDELEAILPQTQCGQCGYPGCRPYAEAIANGDKVNKCPPGGTATMEKLASLMGV). Residues Cys49, Cys52, Cys57, Cys73, Cys114, Cys117, Cys120, Cys124, Cys144, Cys147, Cys150, and Cys154 each coordinate [4Fe-4S] cluster. 4Fe-4S ferredoxin-type domains are found at residues 105–134 (KVAYIREDECIGCTKCIQACPVDAIIGAGK) and 136–164 (MHTVLTADCTGCDLCVEPCPVDCIDMLPV).

Belongs to the 4Fe4S bacterial-type ferredoxin family. RnfB subfamily. As to quaternary structure, the complex is composed of six subunits: RnfA, RnfB, RnfC, RnfD, RnfE and RnfG. It depends on [4Fe-4S] cluster as a cofactor.

The protein resides in the cell inner membrane. Its function is as follows. Part of a membrane-bound complex that couples electron transfer with translocation of ions across the membrane. The polypeptide is Ion-translocating oxidoreductase complex subunit B (Shewanella sp. (strain MR-4)).